A 472-amino-acid polypeptide reads, in one-letter code: MAGDESGTTLGQPHLYKQDLSTLDVSKLTPLSQEIISRQATINIGTIGHVAHGKSTVVKAISGVHTVRFKNELERNITIKLGYANAKVYKLDDPSCPRPECYRSCGSSTPDEFPTDIPGTKGNFKLVRHVSFVDCPGHDILMATMLNGAAVMDAALLLIAGNESCPQPQTSEHLAAIEIMKLKHILILQNKIDLVKESQAKEQYEQILAFVQGTVAEGAPIIPISAQLKYNIEVVCEYIVNKIPVPVRDFTSEPRLIVIRSFDVNKPGCEVDDLKGGVAGGSILKGVLKVGQELEVRPGIVSKDHEGKLMCKPIFSKIVSLFAEHNDLQYAAPGGLIGVGTKIDPTLCRADRMVGQVLGAVGALPEIFTELEISYFLLRRLLGVRTEGDKKAAKVQKLSKNEVLMVNIGSLSTGGRVSAVKADLAKIVLTNPVCTEVGEKIALSRRVEKHWRLIGWGQIRRGVTITPTVDDD.

The tr-type G domain occupies 39–247 (QATINIGTIG…YIVNKIPVPV (209 aa)). Residues 48 to 55 (GHVAHGKS) form a G1 region. 51–56 (AHGKST) is a GTP binding site. Positions 76–80 (NITIK) are G2. Residues 134–137 (DCPG) form a G3 region. Residues 190–193 (NKID) and 225–227 (SAQ) contribute to the GTP site. A G4 region spans residues 190-193 (NKID). Residues 225 to 227 (SAQ) are G5. Residues 457–469 (GQIRRGVTITPTV) are interacts with cdc123.

It belongs to the TRAFAC class translation factor GTPase superfamily. Classic translation factor GTPase family. EIF2G subfamily. In terms of assembly, eukaryotic translation initiation factor 2 eIF2 is a heterotrimeric complex composed of an alpha (EIF2S1), a beta (EIF2S2) and a gamma (EIF2S3) chain. eIF2 is member of the 43S pre-initiation complex (43S PIC).

The protein localises to the cytoplasm. It is found in the cytosol. The enzyme catalyses GTP + H2O = GDP + phosphate + H(+). Functionally, member of the eIF2 complex that functions in the early steps of protein synthesis by forming a ternary complex with GTP and initiator tRNA. This complex binds to a 40S ribosomal subunit, followed by mRNA binding to form the 43S pre-initiation complex (43S PIC). Junction of the 60S ribosomal subunit to form the 80S initiation complex is preceded by hydrolysis of the GTP bound to eIF2 and release of an eIF2-GDP binary complex. In order for eIF2 to recycle and catalyze another round of initiation, the GDP bound to eIF2 must exchange with GTP by way of a reaction catalyzed by eIF-2B. This is Eukaryotic translation initiation factor 2 subunit 3 from Danio rerio (Zebrafish).